The sequence spans 543 residues: T-complex protein 1 subunit eta (543 aa).

At M1 the chain carries N-acetylmethionine. Residue G41 participates in ADP binding. G41 is a binding site for ATP. K67 is modified (N6-acetyllysine). Position 92 (D92) interacts with Mg(2+). Positions 93, 94, 95, 96, 164, and 165 each coordinate ADP. G93 is a binding site for ATP. S96 lines the ATP pocket. 2 positions are modified to N6-acetyllysine: K250 and K320. Residues R398 and G409 each coordinate ATP. G409 is an ADP binding site. K430 is covalently cross-linked (Glycyl lysine isopeptide (Lys-Gly) (interchain with G-Cter in SUMO2)). ADP-binding residues include E494 and R499. R499 serves as a coordination point for ATP. A disordered region spans residues 524–543 (RSTVDAPTAAGRGRGRGRPH). The residue at position 535 (R535) is an Omega-N-methylarginine.

It belongs to the TCP-1 chaperonin family. As to quaternary structure, component of the chaperonin-containing T-complex (TRiC), a hexadecamer composed of two identical back-to-back stacked rings enclosing a protein folding chamber. Each ring is made up of eight different subunits: TCP1/CCT1, CCT2, CCT3, CCT4, CCT5, CCT6A/CCT6, CCT7, CCT8. Interacts with PACRG. Interacts with DLEC1.

It is found in the cytoplasm. The enzyme catalyses ATP + H2O = ADP + phosphate + H(+). Component of the chaperonin-containing T-complex (TRiC), a molecular chaperone complex that assists the folding of actin, tubulin and other proteins upon ATP hydrolysis. The TRiC complex mediates the folding of WRAP53/TCAB1, thereby regulating telomere maintenance. The polypeptide is T-complex protein 1 subunit eta (CCT7) (Homo sapiens (Human)).